The following is a 464-amino-acid chain: MNSFSPTEDTIAAIATAVSPGQGSIAAIRISGSSAIETSKNIVDVPGIQDWSTHKVLYGHVTEENRKKYIDEVLILVMKGPRSFTGEDVVEIHCHGGIIPVQKILERILAFPSVRRAEPGEFSQRAVLNGRLSLTQAESISELVSARSRKAAELAINGIEGNIQTTIQSIRKRLIEQLTEIEARIDFEEDLPLLDEKHVKNEIVAIKKDLNELIDNAKRGSWVRSGLKVALAGKPNVGKSSLMNRLSKQEKAIVTDLPGTTRDILESEIVLEGIPVTFIDTAGLRDTKDIIEKIGISRTKKTLIHADLIILIFDYSSGWTNEDESILKQLPVNIPLLIVGNKSDLMNDQSFEKVPKYILKKENLVILSAKTGNGEDDLINYLLKKCGSSQTHGLDIALNERQLDLAKSTTESLENINKVFDEKLPWDFWTIDLRQAINYLGELTGEDLTENLLDNIFSKFCIGK.

The (6S)-5-formyl-5,6,7,8-tetrahydrofolate site is built by Arg29, Glu91, and Arg131. Residues 226–387 (GLKVALAGKP…LINYLLKKCG (162 aa)) form the TrmE-type G domain. Asn236 serves as a coordination point for K(+). GTP-binding positions include 236 to 241 (NVGKSS), 255 to 261 (TDLPGTT), and 280 to 283 (DTAG). Ser240 contributes to the Mg(2+) binding site. The K(+) site is built by Thr255, Leu257, and Thr260. Thr261 is a Mg(2+) binding site. Lys464 lines the (6S)-5-formyl-5,6,7,8-tetrahydrofolate pocket.

It belongs to the TRAFAC class TrmE-Era-EngA-EngB-Septin-like GTPase superfamily. TrmE GTPase family. Homodimer. Heterotetramer of two MnmE and two MnmG subunits. K(+) serves as cofactor.

Its subcellular location is the cytoplasm. Functionally, exhibits a very high intrinsic GTPase hydrolysis rate. Involved in the addition of a carboxymethylaminomethyl (cmnm) group at the wobble position (U34) of certain tRNAs, forming tRNA-cmnm(5)s(2)U34. This chain is tRNA modification GTPase MnmE, found in Prochlorococcus marinus (strain NATL1A).